Here is an 872-residue protein sequence, read N- to C-terminus: Metabotropic glutamate receptor 2 (872 aa).

The first 18 residues, 1-18 (MESLLGFLALLLLWGAVA), serve as a signal peptide directing secretion. Residues 19–567 (EGPAKKVLTL…QEYIRWGDAW (549 aa)) are Extracellular-facing. Residues cysteine 50 and cysteine 92 are joined by a disulfide bond. L-glutamate-binding residues include arginine 57, arginine 61, serine 145, alanine 166, and threonine 168. 2 N-linked (GlcNAc...) asparagine glycosylation sites follow: asparagine 203 and asparagine 286. Intrachain disulfides connect cysteine 234-cysteine 518, cysteine 355-cysteine 362, cysteine 400-cysteine 407, cysteine 500-cysteine 519, cysteine 504-cysteine 522, cysteine 525-cysteine 537, and cysteine 540-cysteine 553. An L-glutamate-binding site is contributed by aspartate 295. N-linked (GlcNAc...) asparagine glycosylation occurs at asparagine 338. Lysine 377 contributes to the L-glutamate binding site. Asparagine 402 is a glycosylation site (N-linked (GlcNAc...) asparagine). N-linked (GlcNAc...) asparagine glycosylation occurs at asparagine 547. Residues 568–590 (AVGPVTIACLGALATLFVLGVFV) traverse the membrane as a helical segment. Over 591–604 (RHNATPVVKASGRE) the chain is Cytoplasmic. The helical transmembrane segment at 605–625 (LCYILLGGVFLCYCMTFVFIA) threads the bilayer. At 626–636 (KPSTAVCTLRR) the chain is on the extracellular side. Cysteine 632 and cysteine 721 are joined by a disulfide. Residues 637-655 (LGLGTAFSVCYSALLTKTN) form a helical membrane-spanning segment. Topologically, residues 656-679 (RIARIFGGAREGAQRPRFISPASQ) are cytoplasmic. Residues 677–685 (ASQVAICLA) form an important for interaction with HTR2A region. Residues 680–700 (VAICLALISGQLLIVAAWLVV) form a helical membrane-spanning segment. Over 701 to 725 (EAPGTGKETAPERREVVTLRCNHRD) the chain is Extracellular. A helical membrane pass occupies residues 726-747 (ASMLGSLAYNVLLIALCTLYAF). The Cytoplasmic segment spans residues 748 to 760 (KTRKCPENFNEAK). A helical membrane pass occupies residues 761 to 783 (FIGFTMYTTCIIWLAFLPIFYVT). Topologically, residues 784–793 (SSDYRVQTTT) are extracellular. Residues 794–819 (MCVSVSLSGSVVLGCLFAPKLHIILF) form a helical membrane-spanning segment. Residues 820-872 (QPQKNVVSHRAPTSRFGSAAPRASANLGQGSGSQFVPTVCNGREVVDSTTSSL) lie on the Cytoplasmic side of the membrane.

It belongs to the G-protein coupled receptor 3 family. Forms heterodimers with GRM3 or GRM4. Interacts with GNAI1. Interacts with TAMALIN. Interacts with HTR2A. Is widely distributed in the CNS and prominent expression is seen in Golgi cells of the cerebellum and some particular neuronal cells in other brain regions.

The protein resides in the cell membrane. It localises to the synapse. Its subcellular location is the cell projection. It is found in the dendrite. Dimeric G protein-coupled receptor which is activated by the excitatory neurotransmitter L-glutamate. Plays critical roles in modulating synaptic transmission and neuronal excitability. Upon activation by glutamate, inhibits presynaptic calcium channels, reducing further glutamate release and dampening excitatory signaling. Mechanistically, ligand binding causes a conformation change that triggers signaling via guanine nucleotide-binding proteins (G proteins) and modulates the activity of down-stream effectors, such as adenylate cyclase. May mediate suppression of neurotransmission or may be involved in synaptogenesis or synaptic stabilization. This chain is Metabotropic glutamate receptor 2 (Grm2), found in Rattus norvegicus (Rat).